We begin with the raw amino-acid sequence, 243 residues long: Chromosome partition protein MukE (243 aa).

A disordered region spans residues D214–A243. The span at N225–A243 shows a compositional bias: acidic residues.

This sequence belongs to the MukE family. Interacts, and probably forms a ternary complex, with MukF and MukB. The complex formation is stimulated by calcium or magnesium.

It is found in the cytoplasm. Its subcellular location is the nucleoid. Its function is as follows. Involved in chromosome condensation, segregation and cell cycle progression. May participate in facilitating chromosome segregation by condensation DNA from both sides of a centrally located replisome during cell division. Probably acts via its interaction with MukB and MukF. The protein is Chromosome partition protein MukE of Pasteurella multocida (strain Pm70).